The following is a 234-amino-acid chain: uncharacterized protein (234 aa).

Gly68 to Ser70 contributes to the L-glutamine binding site. Residue Cys101 is the Nucleophile of the active site. L-glutamine contacts are provided by residues Arg131 and Ile167–Arg168. Catalysis depends on charge relay system residues His208 and Glu210.

The protein belongs to the glutaminase PdxT/SNO family.

Its subcellular location is the cytoplasm. It carries out the reaction L-glutamine + H2O = L-glutamate + NH4(+). This is an uncharacterized protein from Schizosaccharomyces pombe (strain 972 / ATCC 24843) (Fission yeast).